The sequence spans 520 residues: Translation initiation factor IF3-1, mitochondrial (520 aa).

Residues 1 to 66 (MAIWRIINRS…SNIFQNLRFL (66 aa)) constitute a mitochondrion transit peptide. Over residues 271 to 282 (ARVKEESPKPDS) the composition is skewed to basic and acidic residues. The segment at 271–520 (ARVKEESPKP…YGIFSTPKTK (250 aa)) is disordered. Residues 336–361 (EPQSPNQHVNPQRPRFSNQAPNQQPT) are compositionally biased toward polar residues. Over residues 369–379 (PNQPPSAPRPQ) the composition is skewed to pro residues. 2 stretches are compositionally biased toward polar residues: residues 404–422 (NQAP…FPNQ) and 458–468 (FQNQAPNQQPT). Over residues 473-485 (PQPPNPPRAPPRP) the composition is skewed to pro residues.

Belongs to the IF-3 family. As to quaternary structure, monomer.

It localises to the mitochondrion. Its function is as follows. IF-3 binds to the 30S ribosomal subunit and shifts the equilibrium between 70S ribosomes and their 50S and 30S subunits in favor of the free subunits, thus enhancing the availability of 30S subunits on which protein synthesis initiation begins. The chain is Translation initiation factor IF3-1, mitochondrial from Arabidopsis thaliana (Mouse-ear cress).